A 76-amino-acid polypeptide reads, in one-letter code: Putative snRNP Sm-like protein (76 aa).

The Sm domain maps to 4-76; the sequence is RPLDVIHKSL…VLALSPVELE (73 aa).

It belongs to the snRNP Sm proteins family.

The chain is Putative snRNP Sm-like protein from Thermococcus kodakarensis (strain ATCC BAA-918 / JCM 12380 / KOD1) (Pyrococcus kodakaraensis (strain KOD1)).